Consider the following 212-residue polypeptide: FMN-dependent NAD(P)H:quinone oxidoreductase 1 (212 aa).

Residues Ser-10, 16–18 (SQS), and 97–100 (MYNF) each bind FMN. 2 residues coordinate substrate: Asn-99 and Tyr-131. FMN-binding positions include 145 to 148 (SRGG) and Glu-187. Substrate is bound at residue Glu-188.

The protein belongs to the azoreductase type 1 family. Homodimer. Homotetramer formed by a dimer of dimers when the ionic strength is high. FMN serves as cofactor.

It carries out the reaction 2 a quinone + NADPH + H(+) = 2 a 1,4-benzosemiquinone + NADP(+). The catalysed reaction is 2 a quinone + NADH + H(+) = 2 a 1,4-benzosemiquinone + NAD(+). The enzyme catalyses N,N-dimethyl-1,4-phenylenediamine + anthranilate + 2 NAD(+) = 2-(4-dimethylaminophenyl)diazenylbenzoate + 2 NADH + 2 H(+). Azoreductase activity increases with salt strength. In terms of biological role, quinone reductase that provides resistance to thiol-specific stress caused by electrophilic quinones. Shows a preference for benzoquinones. Also exhibits azoreductase activity. Catalyzes the reductive cleavage of the azo bond in aromatic azo compounds to the corresponding amines. NADPH is the preferred electron donor for azoreductase activity, but it can also use NADH. Can reduce different classes of azo dyes, including the common azo dyes methyl red and p-aminoazobenzene sulfonamide (PAABSA). Can activate several azo pro-drugs used in the treatment of inflammatory bowel disease (IBD), including balsalazide, sulfasalazine and olsalazine. Also acts as a nitrodeductase, and can reduce and hence activate the nitroaromatic drug nitrofurazone, a broad spectrum antibiotic. This chain is FMN-dependent NAD(P)H:quinone oxidoreductase 1, found in Pseudomonas aeruginosa (strain ATCC 15692 / DSM 22644 / CIP 104116 / JCM 14847 / LMG 12228 / 1C / PRS 101 / PAO1).